We begin with the raw amino-acid sequence, 57 residues long: Cytochrome b-c1 complex subunit 10, mitochondrial (57 aa).

The Mitochondrial matrix segment spans residues 1-23; the sequence is MAGTSGLLNAVKPKIQTIDIQAA. The helical transmembrane segment at 24-44 threads the bilayer; it reads AGWGIAAAAGAIWVVQPFGWI. Over 45–57 the chain is Mitochondrial intermembrane; it reads KKTFIDPPPTEEK.

Belongs to the UQCR11/QCR10 family. As to quaternary structure, component of the ubiquinol-cytochrome c oxidoreductase (cytochrome b-c1 complex, complex III, CIII), a multisubunit enzyme composed of 10 subunits. The complex is composed of 3 respiratory subunits cytochrome b (MT-CYB), cytochrome c1 (CYC1-1 or CYC1-2) and Rieske protein (UCR1-1 or UCR1-2), 2 core protein subunits MPPalpha1 (or MPPalpha2) and MPPB, and 5 low-molecular weight protein subunits QCR7-1 (or QCR7-2), UCRQ-1 (or UCRQ-2), QCR9, UCRY and probably QCR6-1 (or QCR6-2). The complex exists as an obligatory dimer and forms supercomplexes (SCs) in the inner mitochondrial membrane with NADH-ubiquinone oxidoreductase (complex I, CI), resulting in different assemblies (supercomplexes SCI(1)III(2) and SCI(2)III(4)).

The protein localises to the mitochondrion inner membrane. Functionally, component of the ubiquinol-cytochrome c oxidoreductase, a multisubunit transmembrane complex that is part of the mitochondrial electron transport chain which drives oxidative phosphorylation. The respiratory chain contains 3 multisubunit complexes succinate dehydrogenase (complex II, CII), ubiquinol-cytochrome c oxidoreductase (cytochrome b-c1 complex, complex III, CIII) and cytochrome c oxidase (complex IV, CIV), that cooperate to transfer electrons derived from NADH and succinate to molecular oxygen, creating an electrochemical gradient over the inner membrane that drives transmembrane transport and the ATP synthase. The cytochrome b-c1 complex catalyzes electron transfer from ubiquinol to cytochrome c, linking this redox reaction to translocation of protons across the mitochondrial inner membrane, with protons being carried across the membrane as hydrogens on the quinol. In the process called Q cycle, 2 protons are consumed from the matrix, 4 protons are released into the intermembrane space and 2 electrons are passed to cytochrome c. This chain is Cytochrome b-c1 complex subunit 10, mitochondrial (UCRY), found in Arabidopsis thaliana (Mouse-ear cress).